A 420-amino-acid polypeptide reads, in one-letter code: Histidine--tRNA ligase (420 aa).

Belongs to the class-II aminoacyl-tRNA synthetase family. Homodimer.

The protein resides in the cytoplasm. The enzyme catalyses tRNA(His) + L-histidine + ATP = L-histidyl-tRNA(His) + AMP + diphosphate + H(+). This chain is Histidine--tRNA ligase, found in Thermotoga sp. (strain RQ2).